A 681-amino-acid chain; its full sequence is Long-chain-fatty-acid--CoA ligase heimdall (681 aa).

ATP is bound by residues 223 to 231, 414 to 419, Asp-491, Arg-506, and Lys-639; these read TSGTVGMPK and ECYGMS.

This sequence belongs to the ATP-dependent AMP-binding enzyme family. Bubblegum subfamily.

It carries out the reaction a long-chain fatty acid + ATP + CoA = a long-chain fatty acyl-CoA + AMP + diphosphate. In terms of biological role, mediates activation of long-chain fatty acids for both synthesis of cellular lipids, and degradation via beta-oxidation. Probably by regulating lipid storage and catabolism, plays a role in neuronal function. The chain is Long-chain-fatty-acid--CoA ligase heimdall from Drosophila melanogaster (Fruit fly).